Reading from the N-terminus, the 685-residue chain is Probable glucan endo-1,3-beta-glucosidase btgC (685 aa).

Disordered stretches follow at residues 1–96 (MSGP…NLGP), 119–168 (GIDA…RDSY), and 180–202 (PAGQLTPGGSNPSQRSLFDSPYQ). At 1–312 (MSGPHRSFSF…PTPGGGSRKR (312 aa)) the chain is on the cytoplasmic side. Polar residues-rich tracts occupy residues 47–61 (SARSQAMGSSPSSGF) and 73–90 (GQNSGHTQAMRTNSTTPG). The chain crosses the membrane as a helical; Signal-anchor for type II membrane protein span at residues 313 to 333 (GWIVGLALAFIVVGAIVGGAV). Residues 334 to 685 (GGTLGNRENE…IPDCGGKTAA (352 aa)) are Extracellular-facing. A disordered region spans residues 335-369 (GTLGNRENEAPDTTKSASSDTESNGDLNKDSSEIK). Residues 345–360 (PDTTKSASSDTESNGD) show a composition bias toward polar residues. 3 N-linked (GlcNAc...) asparagine glycosylation sites follow: Asn-405, Asn-428, and Asn-456. Catalysis depends on Glu-488, which acts as the Proton donor. The active-site Nucleophile is Glu-587. N-linked (GlcNAc...) asparagine glycosylation occurs at Asn-632.

This sequence belongs to the glycosyl hydrolase 17 family.

It is found in the cell membrane. The catalysed reaction is Hydrolysis of (1-&gt;3)-beta-D-glucosidic linkages in (1-&gt;3)-beta-D-glucans.. Glucanases play a role in cell expansion during growth, in cell-cell fusion during mating, and in spore release during sporulation. This enzyme may be involved in beta-glucan degradation. Active on laminarin and lichenan. This is Probable glucan endo-1,3-beta-glucosidase btgC (btgC) from Aspergillus oryzae (strain ATCC 42149 / RIB 40) (Yellow koji mold).